A 280-amino-acid polypeptide reads, in one-letter code: Inner kinetochore subunit fta1 (280 aa).

Belongs to the CENP-L/IML3 family. As to quaternary structure, component of the inner kinetochore constitutive centromere-associated network (CCAN) (also known as central kinetochore Sim4 complex in fission yeast), which is composed of at least cnl2, cnp3, cnp20, fta1, fta2, fta3, fta4, fta6, fta7, mal2, mhf1, mhf2, mis6, mis15, mis17, sim4 and wip1.

It localises to the nucleus. The protein localises to the chromosome. The protein resides in the centromere. It is found in the kinetochore. Functionally, component of the kinetochore, a multiprotein complex that assembles on centromeric DNA and attaches chromosomes to spindle microtubules, mediating chromosome segregation and sister chromatid segregation during meiosis and mitosis. Component of the inner kinetochore constitutive centromere-associated network (CCAN), which serves as a structural platform for outer kinetochore assembly. This chain is Inner kinetochore subunit fta1 (fta1), found in Schizosaccharomyces pombe (strain 972 / ATCC 24843) (Fission yeast).